Reading from the N-terminus, the 134-residue chain is 6,7-dimethyl-8-ribityllumazine synthase (134 aa).

5-amino-6-(D-ribitylamino)uracil contacts are provided by residues phenylalanine 12, 44–46 (VFD), and 68–70 (SVI). 73–74 (ET) contributes to the (2S)-2-hydroxy-3-oxobutyl phosphate binding site. Catalysis depends on histidine 76, which acts as the Proton donor. 5-amino-6-(D-ribitylamino)uracil is bound at residue leucine 101. Arginine 116 is a binding site for (2S)-2-hydroxy-3-oxobutyl phosphate.

It belongs to the DMRL synthase family.

The enzyme catalyses (2S)-2-hydroxy-3-oxobutyl phosphate + 5-amino-6-(D-ribitylamino)uracil = 6,7-dimethyl-8-(1-D-ribityl)lumazine + phosphate + 2 H2O + H(+). The protein operates within cofactor biosynthesis; riboflavin biosynthesis; riboflavin from 2-hydroxy-3-oxobutyl phosphate and 5-amino-6-(D-ribitylamino)uracil: step 1/2. Functionally, catalyzes the formation of 6,7-dimethyl-8-ribityllumazine by condensation of 5-amino-6-(D-ribitylamino)uracil with 3,4-dihydroxy-2-butanone 4-phosphate. This is the penultimate step in the biosynthesis of riboflavin. The sequence is that of 6,7-dimethyl-8-ribityllumazine synthase from Methanosarcina acetivorans (strain ATCC 35395 / DSM 2834 / JCM 12185 / C2A).